The sequence spans 92 residues: Small ribosomal subunit protein uS17 (92 aa).

It belongs to the universal ribosomal protein uS17 family. In terms of assembly, part of the 30S ribosomal subunit.

One of the primary rRNA binding proteins, it binds specifically to the 5'-end of 16S ribosomal RNA. This chain is Small ribosomal subunit protein uS17, found in Corynebacterium glutamicum (strain ATCC 13032 / DSM 20300 / JCM 1318 / BCRC 11384 / CCUG 27702 / LMG 3730 / NBRC 12168 / NCIMB 10025 / NRRL B-2784 / 534).